The sequence spans 312 residues: Acetaldehyde dehydrogenase (312 aa).

12–15 (SGNI) lines the NAD(+) pocket. Cysteine 132 acts as the Acyl-thioester intermediate in catalysis. NAD(+) is bound by residues 163–171 (SAGPGTRAN) and asparagine 290.

This sequence belongs to the acetaldehyde dehydrogenase family. As to quaternary structure, heterotetramer composed of two DmpG (aldolase) and two DmpF (dehydrogenase) subunits, which allows a direct channeling of acetaldehyde between the two active sites.

The enzyme catalyses acetaldehyde + NAD(+) + CoA = acetyl-CoA + NADH + H(+). It functions in the pathway aromatic compound metabolism; phenol degradation. Is not activated by Mn(2+), Mg(2+), Ca(2+), Zn(2+) or Co(2+). Functionally, catalyzes the conversion of acetaldehyde to acetyl-CoA, using NAD(+) and coenzyme A. Can also act on propanal and butanal to form propanoyl-CoA and butanoyl-CoA, respectively. Is the final enzyme in the meta-cleavage pathway for the degradation of aromatic compounds such as phenols, cresols and catechols. NADP(+) can replace NAD(+) but the rate of reaction is much slower. This is Acetaldehyde dehydrogenase (dmpF) from Pseudomonas sp. (strain CF600).